We begin with the raw amino-acid sequence, 436 residues long: Trigger factor (436 aa).

Disordered regions lie at residues 1-26 (MQVS…RVEN) and 81-100 (QESL…TGEG). One can recognise a PPIase FKBP-type domain in the interval 161–246 (EDRVVIDFHG…VKRVEEPQLP (86 aa)).

The protein belongs to the FKBP-type PPIase family. Tig subfamily.

Its subcellular location is the cytoplasm. The catalysed reaction is [protein]-peptidylproline (omega=180) = [protein]-peptidylproline (omega=0). Its function is as follows. Involved in protein export. Acts as a chaperone by maintaining the newly synthesized protein in an open conformation. Functions as a peptidyl-prolyl cis-trans isomerase. In Halorhodospira halophila (strain DSM 244 / SL1) (Ectothiorhodospira halophila (strain DSM 244 / SL1)), this protein is Trigger factor.